The following is a 509-amino-acid chain: Coiled-coil domain-containing protein 181 (509 aa).

Over residues 58 to 82 (VIEHTKQHSDPDKSLQDEVSPRKND) the composition is skewed to basic and acidic residues. Disordered stretches follow at residues 58 to 120 (VIEH…EEED), 241 to 332 (PINN…VTST), and 345 to 367 (QLEQ…EEKE). Polar residues-rich tracts occupy residues 243–266 (NNAN…SVSG) and 300–332 (TCPS…VTST). A coiled-coil region spans residues 335 to 375 (LSPRQKELQKQLEQKREKLKREEERRKIEEEKEKKRENDIV).

The protein belongs to the CCDC181 family. As to quaternary structure, homodimer. Interacts with HOOK1. Interacts with HOOK2. Interacts with HOOK3.

It localises to the cytoplasm. The protein resides in the cytoskeleton. The protein localises to the cell projection. It is found in the cilium. Its subcellular location is the flagellum. Microtubule-binding protein that localizes to the microtubular manchette of elongating spermatids. The chain is Coiled-coil domain-containing protein 181 from Pongo abelii (Sumatran orangutan).